The sequence spans 768 residues: Putative calcium up-regulated protein H (768 aa).

The tract at residues M1–T22 is disordered. 2 Ricin B-type lectin domains span residues K25–F145 and Q116–N248.

It belongs to the cup family.

The protein localises to the cytoplasm. It is found in the membrane. May play an important role in stabilizing and/or regulating the cell membrane during Ca(2+) stress or certain stages of development. The polypeptide is Putative calcium up-regulated protein H (cupH) (Dictyostelium discoideum (Social amoeba)).